Consider the following 758-residue polypeptide: MAVPAALIPPTQLVPPQPPISTSASSSGTTTSTSSATSSPAPSIGPPASSGPTLFRPEPIASAAAAAATVTSTGGGGGGGGSGGGGGSSGNGGGGGGGGGGSNCNPNLAAASNGSGGGGGGISAGGGVASSTPINASTGSSSSSSSSSSSSSSSSSSSSSSSSCGPLPGKPVYSTPSPVENTPQNNECKMVDLRGAKVASFTVEGCELICLPQAFDLFLKHLVGGLHTVYTKLKRLEITPVVCNVEQVRILRGLGAIQPGVNRCKLISRKDFETLYNDCTNASSRPGRPPKRTQSVTSPENSHIMPHSVPGLMSPGIIPPTGLTAAAAAAAAATNAAIAEAMKVKKIKLEAMSNYHASNNQHGADSENGDMNSSVGSSDGSWDKETLPSSPSQGPQASITHPRMPGARSLPLSHPLNHLQQSHLLPNGLELPFMMMPHPLIPVSLPPASVTMAMSQMNHLSTIANMAAAAQVQSPPSRVETSVIKERVPDSPSPAPSLEEGRRPGSHPSSHRSSSVSSSPARTESSSDRIPVHQNGLSMNQMLMGLSPNVLPGPKEGDLAGHDMGHESKRMHIEKDETPLSTPTARDSLDKLSLTGHGQPLPPGFPSPFLFPDGLSSIETLLTNIQGLLKVAIDNARAQEKQVQLEKTELKMDFLRERELRETLEKQLAMEQKNRAIVQKRLKKEKKAKRKLQEALEFETKRREQAEQTLKQAASTDSLRVLNDSLTPEIEADRSGGRTDAERTIQDGRLYLKTTVMY.

Disordered stretches follow at residues Met1–Asn105 and Ile134–Asn185. Residues Ile20–Thr53 show a composition bias toward low complexity. The span at Thr73–Ser102 shows a compositional bias: gly residues. Positions Ser140 to Ser163 are enriched in low complexity. The span at Ser174–Asn185 shows a compositional bias: polar residues. Residues Lys189 to Leu275 are DACHbox-N. Positions Lys189 to Lys384 are interaction with SIX6 and HDAC3. Disordered regions lie at residues Thr280–Ser302, Ser358–His414, Ser474–Val532, and Met544–Met564. Polar residues-rich tracts occupy residues Arg292 to Asn301, Ser358 to Gly380, and Leu387 to Ile399. Residue Ser491 is modified to Phosphoserine. Positions Ser506 to Glu524 are enriched in low complexity. Positions Lys555–Met564 are enriched in basic and acidic residues. The segment at Ser616 to Leu696 is DACHbox-C. An interaction with SIN3A region spans residues Gly627 to Ala706. Residues Lys630–Ser718 adopt a coiled-coil conformation.

Belongs to the DACH/dachshund family. As to quaternary structure, interacts with SIX1, SIX6 and EYA3. Interacts with NCOR1 and HDAC3 through its N-terminus. Interacts with SIN3A through its C-terminus. Interacts with SMAD3 and SMAD4. In terms of tissue distribution, widely expressed. Isoform 2 is found in brain, heart, kidney, liver, leukocytes and spleen. Isoform 3 is found in liver and heart. Isoform 4 is found in spleen.

It localises to the nucleus. Transcription factor that is involved in regulation of organogenesis. Seems to be a regulator of SIX1, SIX6 and probably SIX5. Corepression of precursor cell proliferation in myoblasts by SIX1 is switched to coactivation through recruitment of EYA3 to the SIX1-DACH1 complex. Transcriptional activation also seems to involve association of CREBBP. Seems to act as a corepressor of SIX6 in regulating proliferation by directly repressing cyclin-dependent kinase inhibitors, including the p27Kip1 promoter. Inhibits TGF-beta signaling through interaction with SMAD4 and NCOR1. Binds to chromatin DNA via its DACHbox-N domain. This Homo sapiens (Human) protein is Dachshund homolog 1 (DACH1).